The primary structure comprises 89 residues: Small ribosomal subunit protein uS15 (89 aa).

Belongs to the universal ribosomal protein uS15 family. Part of the 30S ribosomal subunit. Forms a bridge to the 50S subunit in the 70S ribosome, contacting the 23S rRNA.

Functionally, one of the primary rRNA binding proteins, it binds directly to 16S rRNA where it helps nucleate assembly of the platform of the 30S subunit by binding and bridging several RNA helices of the 16S rRNA. In terms of biological role, forms an intersubunit bridge (bridge B4) with the 23S rRNA of the 50S subunit in the ribosome. This is Small ribosomal subunit protein uS15 from Staphylococcus aureus (strain JH1).